The sequence spans 387 residues: S-adenosylmethionine synthase (387 aa).

Glu-8 lines the Mg(2+) pocket. His-14 contributes to the ATP binding site. Glu-42 lines the K(+) pocket. L-methionine contacts are provided by Glu-55 and Gln-98. Residues 166-168 (DGK), 234-237 (SGRF), Asp-245, 251-252 (RK), Ala-268, Lys-272, and Lys-276 each bind ATP. Asp-245 provides a ligand contact to L-methionine. L-methionine is bound at residue Lys-276.

This sequence belongs to the AdoMet synthase family. As to quaternary structure, homotetramer. Mn(2+) serves as cofactor. Mg(2+) is required as a cofactor. The cofactor is Co(2+). Requires K(+) as cofactor.

Its subcellular location is the cytoplasm. It carries out the reaction L-methionine + ATP + H2O = S-adenosyl-L-methionine + phosphate + diphosphate. It functions in the pathway amino-acid biosynthesis; S-adenosyl-L-methionine biosynthesis; S-adenosyl-L-methionine from L-methionine: step 1/1. Catalyzes the formation of S-adenosylmethionine from methionine and ATP. The reaction comprises two steps that are both catalyzed by the same enzyme: formation of S-adenosylmethionine (AdoMet) and triphosphate, and subsequent hydrolysis of the triphosphate. This chain is S-adenosylmethionine synthase (METK-1), found in Ostreococcus lucimarinus (strain CCE9901).